Here is a 758-residue protein sequence, read N- to C-terminus: Matrix metalloproteinase-2 (758 aa).

The N-terminal stretch at 1-17 (MFSKYVLATLLALFAQS) is a signal peptide. H257 contacts Zn(2+). Residue E258 is part of the active site. Positions 261 and 267 each coordinate Zn(2+). The segment at 335-514 (AYWPWNNPSN…HNKPRKPKPD (180 aa)) is disordered. Low complexity predominate over residues 338 to 348 (PWNNPSNNPNN). The segment covering 349–476 (DRNRARERQE…EWERRNRNGA (128 aa)) has biased composition (basic and acidic residues). Residues 479 to 494 (PVTPTANTTPRPTNKP) are compositionally biased toward low complexity. A compositionally biased stretch (basic residues) spans 499-510 (HRQHHHHNKPRK). Hemopexin repeat units lie at residues 513 to 561 (PDSC…WSAL), 565 to 610 (LTKV…GLPP), 612 to 659 (LTHI…WSGV), and 660 to 707 (GYNI…WMQC). C516 and C707 are joined by a disulfide. A helical transmembrane segment spans residues 739 to 756 (LRINHFILSILLLAIANW). Residues 757–758 (RS) are Cytoplasmic-facing.

Belongs to the peptidase M10A family. Ca(2+) is required as a cofactor. Requires Zn(2+) as cofactor. Widely expressed during embryogenesis including in the mesoderm, developing gut, central and peripheral nervous systems and imaginal disks. In the embryonic nervous system, expressed in neurons and glia. In third instar larvae, strongly expressed in the morphogenetic furrow of eye imaginal disks and in the optic lobe region of the brain. Expressed in posterior follicle cells in all mature stage 14 follicles but not in earlier follicles and is also expressed in some anterior follicle cells that help form dorsal eggshell structures.

It localises to the cell membrane. In terms of biological role, has metalloproteinase activity. Proteolytically cleaves the PGRP-LC receptor; involved in gut-fat body innate immunological communication (GFIC)-mediated activation of the imd/Relish signal transduction pathway. Required for larval tissue histolysis during metamorphosis and is involved in pupal head eversion and fusion of the wing imaginal tissue. Required for growth of the dorsal air sac primordium and development of the dorsal air sacs. Promotes embryonic motor axon fasciculation. Cleaves and activates frac to promote motor axon bundling during outgrowth. Promotes the reshaping of adult sensory neuron dendrites from a radial to lattice-like shape which occurs after eclosion by degrading the basement membrane on which the dendrites grow. Involved in inhibition of follicle stem cell proliferation by cleaving Dlp, inhibiting its interaction with wg and preventing Dlp-mediated spreading of wg to follicle stem cells to enhance their proliferation. Plays a role in wound healing. Involved in fat body dissociation which occurs during metamorphosis by degrading basement membrane components, leading to destruction of cell-basement membrane junctions. Required for posterior follicle cell degradation and ovulation. In Drosophila melanogaster (Fruit fly), this protein is Matrix metalloproteinase-2.